The chain runs to 153 residues: Endoribonuclease YbeY (153 aa).

Zn(2+) contacts are provided by H114, H118, and H124.

It belongs to the endoribonuclease YbeY family. Zn(2+) is required as a cofactor.

The protein resides in the cytoplasm. Functionally, single strand-specific metallo-endoribonuclease involved in late-stage 70S ribosome quality control and in maturation of the 3' terminus of the 16S rRNA. The chain is Endoribonuclease YbeY from Shewanella sp. (strain MR-7).